The sequence spans 64 residues: Large ribosomal subunit protein bL33 (64 aa).

It belongs to the bacterial ribosomal protein bL33 family.

In Rippkaea orientalis (strain PCC 8801 / RF-1) (Cyanothece sp. (strain PCC 8801)), this protein is Large ribosomal subunit protein bL33.